A 274-amino-acid polypeptide reads, in one-letter code: Momilactone A synthase (274 aa).

It belongs to the short-chain dehydrogenases/reductases (SDR) family.

It carries out the reaction 3beta-hydroxy-9beta-pimara-7,15-dien-19,6beta-olide + NAD(+) = momilactone A + NADH + H(+). The enzyme catalyses 3beta-hydroxy-9beta-pimara-7,15-dien-19,6beta-olide + NADP(+) = momilactone A + NADPH + H(+). Functionally, involved in momilactone phytoalexins biosynthesis. Catalyzes the last step of momilactone A biosynthesis. This is Momilactone A synthase from Oryza sativa subsp. japonica (Rice).